The primary structure comprises 252 residues: Chitooligosaccharide deacetylase (252 aa).

The Mg(2+) site is built by His-61 and His-125.

The protein belongs to the YdjC deacetylase family. ChbG subfamily. As to quaternary structure, homodimer. Mg(2+) serves as cofactor.

It localises to the cytoplasm. It catalyses the reaction N,N'-diacetylchitobiose + H2O = N-acetyl-beta-D-glucosaminyl-(1-&gt;4)-D-glucosamine + acetate. It carries out the reaction diacetylchitobiose-6'-phosphate + H2O = N'-monoacetylchitobiose-6'-phosphate + acetate. It participates in glycan degradation; chitin degradation. Involved in the degradation of chitin. ChbG is essential for growth on the acetylated chitooligosaccharides chitobiose and chitotriose but is dispensable for growth on cellobiose and chitosan dimer, the deacetylated form of chitobiose. Deacetylation of chitobiose-6-P and chitotriose-6-P is necessary for both the activation of the chb promoter by the regulatory protein ChbR and the hydrolysis of phosphorylated beta-glucosides by the phospho-beta-glucosidase ChbF. Catalyzes the removal of only one acetyl group from chitobiose-6-P to yield monoacetylchitobiose-6-P, the inducer of ChbR and the substrate of ChbF. In Salmonella typhi, this protein is Chitooligosaccharide deacetylase.